A 496-amino-acid chain; its full sequence is Splicing factor U2AF 65 kDa subunit (496 aa).

Residues 1–26 (MSDHQDGMKLEDIERQFLDVAQREGG) show a composition bias toward basic and acidic residues. The interval 1–142 (MSDHQDGMKL…PKKYRFWDVP (142 aa)) is disordered. Residues 59–77 (KKRKRSRSRDRDTRRRSRS) show a composition bias toward basic residues. 2 stretches are compositionally biased toward basic and acidic residues: residues 78–96 (RDRG…DRSR) and 105–138 (GGRD…KYRF). RRM domains are found at residues 184–266 (RRLY…RPRD), 291–368 (NKIF…LACA), and 404–488 (NMVT…YYDV).

Forms a heterodimer with the U2AF small subunit.

The protein localises to the nucleus. In terms of biological role, necessary for the splicing of pre-mRNA. Binds to the polypyrimidine tract of introns early during spliceosome assembly. In Caenorhabditis elegans, this protein is Splicing factor U2AF 65 kDa subunit (uaf-1).